Here is a 61-residue protein sequence, read N- to C-terminus: Large ribosomal subunit protein bL32 (61 aa).

This sequence belongs to the bacterial ribosomal protein bL32 family.

In Acidithiobacillus ferrooxidans (strain ATCC 23270 / DSM 14882 / CIP 104768 / NCIMB 8455) (Ferrobacillus ferrooxidans (strain ATCC 23270)), this protein is Large ribosomal subunit protein bL32.